The chain runs to 115 residues: Large ribosomal subunit protein bL19 (115 aa).

It belongs to the bacterial ribosomal protein bL19 family.

Its function is as follows. This protein is located at the 30S-50S ribosomal subunit interface and may play a role in the structure and function of the aminoacyl-tRNA binding site. This chain is Large ribosomal subunit protein bL19, found in Streptococcus pyogenes serotype M2 (strain MGAS10270).